We begin with the raw amino-acid sequence, 359 residues long: DNA replication and repair protein RecF (359 aa).

ATP is bound at residue 30 to 37 (GPNAKGKT).

Belongs to the RecF family.

It localises to the cytoplasm. The RecF protein is involved in DNA metabolism; it is required for DNA replication and normal SOS inducibility. RecF binds preferentially to single-stranded, linear DNA. It also seems to bind ATP. In Protochlamydia amoebophila (strain UWE25), this protein is DNA replication and repair protein RecF.